A 260-amino-acid polypeptide reads, in one-letter code: Transcription factor SUM-1 (260 aa).

In terms of domain architecture, bHLH spans 112–163; the sequence is DKRKAATLRERRRLRKVNEAFEALKRHTCANPNQRLPKVEILRNAIEYIEKL. Positions 171–208 are disordered; it reads KANGDSEMDSAETSSNTSDAMTDGSSPGSYSSDKAQQY. A compositionally biased stretch (polar residues) spans 181 to 205; that stretch reads AETSSNTSDAMTDGSSPGSYSSDKA.

In terms of assembly, efficient DNA binding requires dimerization with another bHLH protein. Homodimer, and heterodimer with the ubiquitous bHLH protein E12.

It is found in the nucleus. In terms of biological role, regulatory factor during embryogenesis. Conversion of pluripotent secondary mesenchyme cells to myogenic cells. It binds to the MCK enhancer element. The polypeptide is Transcription factor SUM-1 (SUM-1) (Lytechinus variegatus (Green sea urchin)).